We begin with the raw amino-acid sequence, 1040 residues long: MGEEGGSVSHDEEERASVLLGQYLGCEMCSQEAFQAQRSQLVELLVSGSLEGFESVLDWLLSWEVLSWEDYEGFHLLGQPLSHLARRLLDTVWNKGTWACQKLIAAAQEAQADSQSPKLHGCWDPHSLHPARDLQSHRPAIVRRLHSHVEGVLDLAWERGFVSQYECDEIRLPIFTPSQRARRLLDLATVKANGLAAFLLQHVQELPVPLALPLEAATCRKYMAKLRTTVSAQSRFLSTYDGAETLCLEDIYTENVLEVWADVGTAGPPPKSPATLGLEELFSTPGHLNDDADTVLVVGEAGSGKSTLLQRLHLLWAAGRDFQEFLFVFPFSCRQLQCMAKPLSVRTLLFEHCCWPDVGQEDIFQLLLDHPDRVLLTFDGFDEFKFRFTDRERHCSPTDPTSVQTLLFNLLQGNLLKNARKVVTSRPAAVSAFLRKYIRTEFNLKGFSEQGIELYLRKRHREPGVADRLIRLLQATSALHGLCHLPVFSWMVSKCHQELLLQEGGSPKTTTDMYLLILQHFLLHAIPPDSASQGLGPSLLRGRLPTLLHLGRLALWGLGMCCYVFSAQQLQAAQVSPDDISLGFLVRAKGVVPGSTAPLEFLHITFQCFFAAFYLALSADVPPALLRHLFNCGRPGNSPVARLLPTLCIQGSEGKDSSVAALLQKAEPHNLQITAAFLAGLLSREHWGLLAECQTSEKALLRRQACARWCLARSLRKHFHSIPPAAPGEAKSMHAMPGFIWLIRSLYEMQEERLARKAARGLNVGHLKLTFCSVGPAECAALAFVLQHLRRPVALQLDYNSVGDIGVEQLLPCLGVCKALYLRDNNISDRGICKLIECALHCEQLQKLVLFNNKLTDGCAHSMAKLLACRQNFLALRLGNNHITPAGAQVLAEGLRGNTSLQFLGFWGNRVGDEGAQALAEALGDHQSLRWLSLVGNNIGSVGAQALALMLAKNVMLEELCLEENHIQDEGVCSLAEGLKKNSSLKILKLSNNCITYLGAKALLQALERNDTILEVWLRGNIFSLEEVDKLGCRDIRLLL.

2 consecutive CARD domains span residues 26–122 (CEMC…LHGC) and 126–218 (HSLH…EAAT). An ATG16L1-binding motif motif is present at residues 63-77 (WEVLSWEDYEGFHLL). Residues threonine 239, tyrosine 252, threonine 253, glycine 302, serine 303, glycine 304, lysine 305, serine 306, and threonine 307 each contribute to the ADP site. The required for CARD9 binding stretch occupies residues 241 to 274 (DGAETLCLEDIYTENVLEVWADVGTAGPPPKSPA). In terms of domain architecture, NACHT spans 293-618 (DTVLVVGEAG…FFAAFYLALS (326 aa)). ATP is bound at residue 299 to 306 (GEAGSGKS). The S-palmitoyl cysteine moiety is linked to residue cysteine 395. An ADP-binding site is contributed by histidine 603. 9 LRR repeats span residues 791-812 (RPVALQLDYNSVGDIGVEQLLP), 816-839 (VCKALYLRDNNISDRGICKLIECA), 844-865 (QLQKLVLFNNKLTDGCAHSMAK), 872-884 (NFLALRLGNNHIT), 900-920 (SLQFLGFWGNRVGDEGAQALA), 928-949 (SLRWLSLVGNNIGSVGAQALAL), 956-976 (MLEELCLEENHIQDEGVCSLA), 984-1005 (SLKILKLSNNCITYLGAKALLQ), and 1012-1032 (TILEVWLRGNIFSLEEVDKLG). Cysteine 1033 carries S-palmitoyl cysteine lipidation.

This sequence belongs to the NOD1-NOD2 family. Homooligomer: homooligomerizes following muramyl dipeptide (MDP)-binding, promoting RIPK2 recruitment. Interacts (via CARD domain) with RIPK2 (via CARD domain). Following RIPK2 recruitment, RIPK2 homooligomerizes via its CARD domain and forms long filaments named RIPosomes. Interacts (via CARD domain) with ubiquitin; inhibiting interaction with RIPK2. Component of a signaling complex consisting of ARHGEF2, NOD2 and RIPK2. Interacts with ANKRD17 (via N-terminus). Interacts with HSPA1A; the interaction enhances NOD2 stability. Interacts (via both CARD domains) with HSP90; the interaction enhances NOD2 stability. Interacts (via CARD domain) with SOCS3; the interaction promotes NOD2 degradation. Interacts (via CARD domain) with ERBIN; the interaction inhibits activation of NOD2. Interacts with MAPKBP1; the interaction is enhanced in the presence of muramyl dipeptide (MDP) and inhibits NOD2 homooligomerization and activation. Interacts with INAVA; the interaction takes place upon Pattern recognition receptor (PRR) stimulation. Interacts (via NACHT domain) with CARD9. Interacts (via CARD domain) with CASP1; this interaction leads to IL1B processing. Also interacts with CASP4. Interacts with NLRP1; this interaction is enhanced in the presence of muramyl dipeptide (MDP) and leads to increased IL1B release. Interacts with NLRP12; this interaction promotes degradation of NOD2 through the ubiquitin-proteasome pathway. Interacts with ANKHD1, C10orf67, CHMP5, DOCK7, ENTR1, KRT15, LDOC1, PPP1R12C, PPP2R3B, TRIM41 and VIM. Interacts with MAVS; interaction takes place following single-stranded RNA (ssRNA)-binding. Interacts with ATG16L1. Interacts with IRGM; promoting IRGM 'Lys-63'-linked polyubiquitination, which is required for interactions with the core autophagy factors. Palmitoylated by ZDHHC5; palmitoylation is required for proper recruitment to the bacterial entry site and hence for proper signaling upon cognate peptidoglycan detection. Palmitoylation promotes localization to the cell membrane. Palmitoylation protects from SQSTM1/p62-dependent autophagic degradation. Post-translationally, polyubiquitinated by TRIM27, leading to proteasome-mediated degradation. Polyubiquitinated and degraded following muramyl dipeptide (MDP) stimulation, conferring MDP tolerance and preventing septic shock. In terms of processing, degraded via selective autophagy following interaction with IRGM. IRGM promotes NOD2-RIPK2 RIPosome recruitment to autophagosome membranes, promoting their SQSTM1/p62-dependent autophagic degradation. O-glycosylated by OGT, O-GlcNAcylation increases protein stability.

It is found in the cell membrane. It localises to the basolateral cell membrane. Its subcellular location is the cytoplasm. The protein resides in the mitochondrion. ADP-binding promotes an inactive closed conformation. Its function is as follows. Pattern recognition receptor (PRR) that detects bacterial peptidoglycan fragments and other danger signals and plays an important role in gastrointestinal immunity. Specifically activated by muramyl dipeptide (MDP), a fragment of bacterial peptidoglycan found in every bacterial peptidoglycan type. NOD2 specifically recognizes and binds 6-O-phospho-MDP, the phosphorylated form of MDP, which is generated by NAGK. 6-O-phospho-MDP-binding triggers oligomerization that facilitates the binding and subsequent activation of the proximal adapter receptor-interacting RIPK2. Following recruitment, RIPK2 undergoes 'Met-1'- (linear) and 'Lys-63'-linked polyubiquitination by E3 ubiquitin-protein ligases XIAP, BIRC2, BIRC3 and the LUBAC complex, becoming a scaffolding protein for downstream effectors, triggering activation of the NF-kappa-B and MAP kinases signaling. This in turn leads to the transcriptional activation of hundreds of genes involved in immune response. Its ability to detect bacterial MDP plays a central role in maintaining the equilibrium between intestinal microbiota and host immune responses to control inflammation. An imbalance in this relationship results in dysbiosis, whereby pathogenic bacteria prevail on commensals, causing damage in the intestinal epithelial barrier as well as allowing bacterial invasion and inflammation. Acts as a regulator of appetite by sensing MDP in a subset of brain neurons: microbiota-derived MDP reach the brain, where they bind and activate NOD2 in inhibitory hypothalamic neurons, decreasing neuronal activity, thereby regulating satiety and body temperature. NOD2-dependent MDP-sensing of bacterial cell walls in the intestinal epithelial compartment contributes to sustained postnatal growth upon undernutrition. Also plays a role in antiviral response by acting as a sensor of single-stranded RNA (ssRNA) from viruses: upon ssRNA-binding, interacts with MAVS, leading to activation of interferon regulatory factor-3/IRF3 and expression of type I interferon. Also acts as a regulator of autophagy in dendritic cells via its interaction with ATG16L1, possibly by recruiting ATG16L1 at the site of bacterial entry. NOD2 activation in the small intestine crypt also contributes to intestinal stem cells survival and function: acts by promoting mitophagy via its association with ATG16L1. In addition to its main role in innate immunity, also regulates the adaptive immune system by acting as regulator of helper T-cell and regulatory T-cells (Tregs). Besides recognizing pathogens, also involved in the endoplasmic reticulum stress response: acts by sensing and binding to the cytosolic metabolite sphingosine-1-phosphate generated in response to endoplasmic reticulum stress, initiating an inflammation process that leads to activation of the NF-kappa-B and MAP kinases signaling. May also be involved in NLRP1 activation following activation by MDP, leading to CASP1 activation and IL1B release in macrophages. This is Nucleotide-binding oligomerization domain-containing protein 2 (NOD2) from Hylobates lar (Lar gibbon).